The sequence spans 151 residues: Ribosome maturation factor RimP (151 aa).

Belongs to the RimP family.

The protein localises to the cytoplasm. Required for maturation of 30S ribosomal subunits. In Aliivibrio salmonicida (strain LFI1238) (Vibrio salmonicida (strain LFI1238)), this protein is Ribosome maturation factor RimP.